Consider the following 110-residue polypeptide: Putative zinc finger protein ORF110 (110 aa).

The C2H2-type zinc-finger motif lies at 3-26 (YVCTACKLKFHTFEEFKIHVHLFH).

This is Putative zinc finger protein ORF110 from Acidianus filamentous virus 1 (isolate United States/Yellowstone) (AFV-1).